Consider the following 225-residue polypeptide: AA9 family lytic polysaccharide monooxygenase A (225 aa).

A signal peptide spans 1-17; it reads MLTTTFALLTAALGVSA. Cu(2+) contacts are provided by H18 and H85. 2 cysteine pairs are disulfide-bonded: C55/C173 and C143/C225. H159 and Q168 together coordinate O2. Residue Y170 participates in Cu(2+) binding.

It belongs to the polysaccharide monooxygenase AA9 family. The cofactor is Cu(2+).

The protein resides in the secreted. The catalysed reaction is [(1-&gt;4)-beta-D-glucosyl]n+m + reduced acceptor + O2 = 4-dehydro-beta-D-glucosyl-[(1-&gt;4)-beta-D-glucosyl]n-1 + [(1-&gt;4)-beta-D-glucosyl]m + acceptor + H2O.. Is able to utilize various natural phenolic compounds as reducing agents. Most of these reducing agents are present in plants, either free or as lignin building blocks, such as sinapic acid, or as flavonoids such as catechin and dopamine. Phenolic compounds with 1,2-benzenediol and 1,2,3-benzenetriol moieties yield the highest release of oxidized and non-oxidized glucooligosaccharides from cellulose compared to monophenols or sulfur-containing compounds. Lytic polysaccharide monooxygenase (LPMO) that depolymerizes crystalline and amorphous polysaccharides via the oxidation of scissile alpha- or beta-(1-4)-glycosidic bonds, yielding C1 or C4 oxidation products. Catalysis by LPMOs requires the reduction of the active-site copper from Cu(II) to Cu(I) by a reducing agent and H(2)O(2) or O(2) as a cosubstrate. Shows oxidative cleavage of xylan in addition to cellulose. Shows a strong synergistic effect with endoglucanase I (EGI) with a 16-fold higher release of detected oligosaccharides. This is AA9 family lytic polysaccharide monooxygenase A from Thermothelomyces thermophilus (strain ATCC 42464 / BCRC 31852 / DSM 1799) (Sporotrichum thermophile).